The primary structure comprises 396 residues: CCA-adding enzyme (396 aa).

2 residues coordinate ATP: Gly32 and Arg35. 2 residues coordinate CTP: Gly32 and Arg35. 2 residues coordinate Mg(2+): Asp45 and Asp47. Residues Arg116, Asp159, Arg162, Arg165, and Arg168 each contribute to the ATP site. Residues Arg116, Asp159, Arg162, Arg165, and Arg168 each coordinate CTP.

Belongs to the tRNA nucleotidyltransferase/poly(A) polymerase family. Bacterial CCA-adding enzyme type 3 subfamily. Homodimer. Mg(2+) is required as a cofactor.

It catalyses the reaction a tRNA precursor + 2 CTP + ATP = a tRNA with a 3' CCA end + 3 diphosphate. The enzyme catalyses a tRNA with a 3' CCA end + 2 CTP + ATP = a tRNA with a 3' CCACCA end + 3 diphosphate. In terms of biological role, catalyzes the addition and repair of the essential 3'-terminal CCA sequence in tRNAs without using a nucleic acid template. Adds these three nucleotides in the order of C, C, and A to the tRNA nucleotide-73, using CTP and ATP as substrates and producing inorganic pyrophosphate. tRNA 3'-terminal CCA addition is required both for tRNA processing and repair. Also involved in tRNA surveillance by mediating tandem CCA addition to generate a CCACCA at the 3' terminus of unstable tRNAs. While stable tRNAs receive only 3'-terminal CCA, unstable tRNAs are marked with CCACCA and rapidly degraded. The protein is CCA-adding enzyme of Lactobacillus delbrueckii subsp. bulgaricus (strain ATCC BAA-365 / Lb-18).